The primary structure comprises 1003 residues: Cytosolic carboxypeptidase 3 (1003 aa).

The disordered stretch occupies residues 1–23; that stretch reads MSEDSEKEDYSDRTISDEDESDE. Residues 299 to 570 form the Peptidase M14 domain; the sequence is YPYTYTNLQE…HFCDSLLDYC (272 aa). Residues histidine 364, glutamate 367, and histidine 460 each contribute to the Zn(2+) site. Glutamate 534 functions as the Proton donor/acceptor in the catalytic mechanism. 2 disordered regions span residues 642-662 and 911-1003; these read KQLKTKKERNSTIERHQNIRE and KSSE…QRDT. The span at 649-662 shows a compositional bias: basic and acidic residues; the sequence is ERNSTIERHQNIRE. Residues 922–934 show a composition bias toward basic residues; that stretch reads PKKRRKYSRVKAT. Polar residues predominate over residues 963–976; sequence AEGSSQQGTMQTAP.

This sequence belongs to the peptidase M14 family. Requires Zn(2+) as cofactor.

Its subcellular location is the cytoplasm. It localises to the cytosol. It carries out the reaction (L-glutamyl)(n+1)-gamma-L-glutamyl-L-glutamyl-[protein] + H2O = (L-glutamyl)(n)-gamma-L-glutamyl-L-glutamyl-[protein] + L-glutamate. Metallocarboxypeptidase that mediates deglutamylation of tubulin and non-tubulin target proteins. Catalyzes the removal of polyglutamate side chains present on the gamma-carboxyl group of glutamate residues within the C-terminal tail of tubulin protein. Specifically cleaves tubulin long-side-chains, while it is not able to remove the branching point glutamate. Also catalyzes the removal of polyglutamate residues from the carboxy-terminus of non-tubulin proteins such as MYLK. May catalyze the hydrolysis of aspartate from the carboxy-terminus of target proteins. Does not show detyrosinase or deglycylase activities from the carboxy-terminus of target proteins. The protein is Cytosolic carboxypeptidase 3 (AGBL3) of Bos taurus (Bovine).